A 458-amino-acid polypeptide reads, in one-letter code: Phenylalanine-specific permease (458 aa).

The Cytoplasmic segment spans residues 1–27; that stretch reads MKNASTVSEDTASNQEPTLHRGLHNRH. A helical membrane pass occupies residues 28–48; the sequence is IQLIALGGAIGTGLFLGIGPA. Residues 49 to 50 are Periplasmic-facing; it reads IQ. The helical transmembrane segment at 51–71 threads the bilayer; the sequence is MAGPAVLLGYGVAGIIAFLIM. Topologically, residues 72-105 are cytoplasmic; the sequence is RQLGEMVVEEPVSGSFAHFAYKYWGPFAGFLSGW. Residues 106 to 126 form a helical membrane-spanning segment; sequence NYWVMFVLVGMAELTAAGIYM. Over 127–132 the chain is Periplasmic; the sequence is QYWFPD. The helical transmembrane segment at 133-153 threads the bilayer; that stretch reads VPTWIWAAAFFIIINAVNLVN. Topologically, residues 154-160 are cytoplasmic; it reads VRLYGET. The helical transmembrane segment at 161 to 181 threads the bilayer; it reads EFWFALIKVLAIIGMIGFGLW. Residues 182–196 lie on the Periplasmic side of the membrane; it reads LLFSGHGGEKASIDN. Residues 197–217 form a helical membrane-spanning segment; that stretch reads LWRYGGFFATGWNGLILSLAV. Over 218–250 the chain is Cytoplasmic; it reads IMFSFGGLELIGITAAEARDPEKSIPKAVNQVV. Residues 251 to 271 form a helical membrane-spanning segment; the sequence is YRILLFYIGSLVVLLALYPWV. Residues 272–288 lie on the Periplasmic side of the membrane; the sequence is EVKSNSSPFVMIFHNLD. A helical membrane pass occupies residues 289–309; that stretch reads SNVVASALNFVILVASLSVYN. Residues 310-341 are Cytoplasmic-facing; the sequence is SGVYSNSRMLFGLSVQGNAPKFLTRVSRRGVP. Residues 342–362 traverse the membrane as a helical segment; that stretch reads INSLMLSGAITSLVVLINYLL. At 363–367 the chain is on the periplasmic side; the sequence is PQKAF. A helical membrane pass occupies residues 368 to 388; that stretch reads GLLMALVVATLLLNWIMICLA. Over 389 to 411 the chain is Cytoplasmic; the sequence is HLRFRAAMRRQGRETQFKALLYP. The helical transmembrane segment at 412-432 threads the bilayer; the sequence is FGNYLCIAFLGMILLLMCTMD. Over 433–434 the chain is Periplasmic; it reads DM. The chain crosses the membrane as a helical span at residues 435 to 455; that stretch reads RLSAILLPVWIVFLFMAFKTL. Topologically, residues 456–458 are cytoplasmic; sequence RRK.

Belongs to the amino acid-polyamine-organocation (APC) superfamily. Amino acid transporter (AAT) (TC 2.A.3.1) family.

Its subcellular location is the cell inner membrane. The catalysed reaction is L-phenylalanine(in) + H(+)(in) = L-phenylalanine(out) + H(+)(out). Permease that is involved in the active transport across the cytoplasmic membrane of phenylalanine. Can also transport tyrosine, but not tryptophan. This is Phenylalanine-specific permease from Escherichia coli (strain K12).